Here is a 735-residue protein sequence, read N- to C-terminus: METPDYNTPQGGTPSAGSQRTVVEDDSSLIKAVQKGDVVRVQQLLEKGADANACEDTWGWTPLHNAVQAGRVDIVNLLLSHGADPHRRKKNGATPFIIAGIQGDVKLLEILLSCGADVNECDENGFTAFMEAAERGNAEALRFLFAKGANVNLRRQTTKDKRRLKQGGATALMSAAEKGHLEVLRILLNDMKAEVDARDNMGRNALIRTLLNWDCENVEEITSILIQHGADVNVRGERGKTPLIAAVERKHTGLVQMLLSREGINIDARDNEGKTALLIAVDKQLKEIVQLLLEKGADKCDDLVWIARRNHDYHLVKLLLPYVANPDTDPPAGDWSPHSSRWGTALKSLHSMTRPMIGKLKIFIHDDYKIAGTSEGAVYLGIYDNREVAVKVFRENSPRGCKEVSCLRDCGDHSNLVAFYGREDDKGCLYVCVSLCEWTLEEFLRLPREEPVENGEDKFAHSILLSIFEGVQKLHLHGYSHQDLQPQNILIDSKKAVRLADFDQSIRWMGESQMVRRDLEDLGRLVLYVVMKGEIPFETLKTQNDEVLLTMSPDEETKDLIHCLFSPGENVKNCLVDLLGHPFFWTWENRYRTLRNVGNESDIKVRKCKSDLLRLLQHQTLEPPRSFDQWTSKIDKNVMDEMNHFYEKRKKNPYQDTVGDLLKFIRNIGEHINEEKKRGMKEILGDPSRYFQETFPDLVIYIYKKLKETEYRKHFPQPPPRLSVPEAVGPGGIQS.

Residues 1–21 form a disordered region; sequence METPDYNTPQGGTPSAGSQRT. ANK repeat units lie at residues 24 to 53, 58 to 87, 91 to 120, 124 to 153, 167 to 197, 201 to 234, 238 to 268, 272 to 301, and 303 to 328; these read EDDS…DANA, WGWT…DPHR, NGAT…DVNE, NGFT…NVNL, GGAT…EVDA, MGRN…DVNV, RGKT…NIDA, EGKT…DKCD, and LVWI…NPDT. The tract at residues 26–51 is binding to TMEV Leader protein; the sequence is DSSLIKAVQKGDVVRVQQLLEKGADA. 2-5A binding (P-loop) regions lie at residues 229–242 and 253–275; these read GADV…GKTP and GLVQ…EGKT. Residues 364–584 enclose the Protein kinase domain; it reads IHDDYKIAGT…LVDLLGHPFF (221 aa). A C6-type zinc finger spans residues 401-436; sequence CKEVSCLRDCGDHSNLVAFYGREDDKGCLYVCVSLC. A KEN domain is found at 587–722; that stretch reads WENRYRTLRN…KHFPQPPPRL (136 aa). The interval 714-735 is disordered; sequence HFPQPPPRLSVPEAVGPGGIQS.

The protein belongs to the protein kinase superfamily. (Microbial infection) Interacts (via N-terminus) with TMEV leader protein; this interaction prevents RNASEL activation by its substrate 2'-5' oligoadenylates. As to quaternary structure, monomer (inactive form) or homodimer. Interacts with ABCE1; this interaction inhibits the RNASEL. Mn(2+) is required as a cofactor. Requires Mg(2+) as cofactor. As to expression, expressed in spleen, thymus, lung, testis, kidney, liver and heart.

Its subcellular location is the cytoplasm. It localises to the mitochondrion. With respect to regulation, after binding to 2-5A (5'-phosphorylated 2',5'-linked oligoadenylates) the homodimerization and subsequent activation occurs. Inhibited by RNASEL inhibitor ABCE1/RLI, a cytoplasmic member of the ATP-binding cassette (ABC) transporter family. Endoribonuclease that functions in the interferon (IFN) antiviral response. In INF treated and virus infected cells, RNASEL probably mediates its antiviral effects through a combination of direct cleavage of single-stranded viral RNAs, inhibition of protein synthesis through the degradation of rRNA, induction of apoptosis, and induction of other antiviral genes. RNASEL mediated apoptosis is the result of a JNK-dependent stress-response pathway leading to cytochrome c release from mitochondria and caspase-dependent apoptosis. Therefore, activation of RNASEL could lead to elimination of virus infected cells under some circumstances. In the crosstalk between autophagy and apoptosis proposed to induce autophagy as an early stress response to small double-stranded RNA and at later stages of prolonged stress to activate caspase-dependent proteolytic cleavage of BECN1 to terminate autophagy and promote apoptosis. Might play a central role in the regulation of mRNA turnover. Cleaves 3' of UpNp dimers, with preference for UU and UA sequences, to sets of discrete products ranging from between 4 and 22 nucleotides in length. This chain is 2-5A-dependent ribonuclease (Rnasel), found in Mus musculus (Mouse).